A 621-amino-acid chain; its full sequence is Chaperone protein HtpG (621 aa).

Residues 1 to 328 (MKQEKKKFDA…SEDLPLNISR (328 aa)) form an a; substrate-binding region. The tract at residues 329 to 544 (ESLQHNNVLE…EAAMDIRMER (216 aa)) is b. Positions 479-498 (VDQATSSSEEKNKDDKKSDD) are disordered. Residues 486 to 498 (SEEKNKDDKKSDD) are compositionally biased toward basic and acidic residues. Residues 545–621 (FLIEQKQIAN…LNDIVQKAIL (77 aa)) form a c region.

Belongs to the heat shock protein 90 family. Homodimer.

The protein resides in the cytoplasm. Functionally, molecular chaperone. Has ATPase activity. In Rickettsia bellii (strain OSU 85-389), this protein is Chaperone protein HtpG.